A 174-amino-acid polypeptide reads, in one-letter code: MSLNRQEKAVVIEEVSAQVAKAQSIVIAEYRGLDVASVTVLRKTARESGVYLRVLKNTLVRRAVAGTAFEPLSEQLTGPLIYGISADPVAAAKVLAGFAKSNDKLVIKAGSLPNSLLTQDGVKALATMPSREELLSKLLGTMQAPIAQFVRTLNEVPTKFARGLAAVRDQKAAA.

Belongs to the universal ribosomal protein uL10 family. In terms of assembly, part of the ribosomal stalk of the 50S ribosomal subunit. The N-terminus interacts with L11 and the large rRNA to form the base of the stalk. The C-terminus forms an elongated spine to which L12 dimers bind in a sequential fashion forming a multimeric L10(L12)X complex.

In terms of biological role, forms part of the ribosomal stalk, playing a central role in the interaction of the ribosome with GTP-bound translation factors. The sequence is that of Large ribosomal subunit protein uL10 from Bordetella bronchiseptica (strain ATCC BAA-588 / NCTC 13252 / RB50) (Alcaligenes bronchisepticus).